The sequence spans 403 residues: Protein-glutamate methylesterase/protein-glutamine glutaminase (403 aa).

One can recognise a Response regulatory domain in the interval 8 to 126 (AVLIVDDSAL…SAHLRTVSRK (119 aa)). D59 is modified (4-aspartylphosphate). The CheB-type methylesterase domain maps to 204–393 (PLRESGALQI…VSLDDMAATI (190 aa)). Catalysis depends on residues S219, H246, and D342.

Belongs to the CheB family. In terms of processing, phosphorylated by CheA. Phosphorylation of the N-terminal regulatory domain activates the methylesterase activity.

The protein resides in the cytoplasm. The catalysed reaction is [protein]-L-glutamate 5-O-methyl ester + H2O = L-glutamyl-[protein] + methanol + H(+). It catalyses the reaction L-glutaminyl-[protein] + H2O = L-glutamyl-[protein] + NH4(+). Its function is as follows. Involved in chemotaxis. Part of a chemotaxis signal transduction system that modulates chemotaxis in response to various stimuli. Catalyzes the demethylation of specific methylglutamate residues introduced into the chemoreceptors (methyl-accepting chemotaxis proteins or MCP) by CheR. Also mediates the irreversible deamidation of specific glutamine residues to glutamic acid. This chain is Protein-glutamate methylesterase/protein-glutamine glutaminase, found in Treponema pallidum (strain Nichols).